The chain runs to 353 residues: Mitochondrial distribution and morphology protein 10 (353 aa).

This sequence belongs to the MDM10 family. In terms of assembly, component of the ER-mitochondria encounter structure (ERMES) or MDM complex, composed of MMM1, MDM10, MDM12 and MDM34. Associates with the mitochondrial outer membrane sorting assembly machinery SAM(core) complex.

It localises to the mitochondrion outer membrane. Component of the ERMES/MDM complex, which serves as a molecular tether to connect the endoplasmic reticulum and mitochondria. Components of this complex are involved in the control of mitochondrial shape and protein biogenesis and may function in phospholipid exchange. MDM10 is involved in the late assembly steps of the general translocase of the mitochondrial outer membrane (TOM complex). Functions in the TOM40-specific route of the assembly of outer membrane beta-barrel proteins, including the association of TOM40 with the receptor TOM22 and small TOM proteins. Can associate with the SAM(core) complex as well as the MDM12-MMM1 complex, both involved in late steps of the major beta-barrel assembly pathway, that is responsible for biogenesis of all outer membrane beta-barrel proteins. May act as a switch that shuttles between both complexes and channels precursor proteins into the TOM40-specific pathway. Plays a role in mitochondrial morphology and in the inheritance of mitochondria. This chain is Mitochondrial distribution and morphology protein 10, found in Yarrowia lipolytica (strain CLIB 122 / E 150) (Yeast).